A 702-amino-acid chain; its full sequence is MKAAVRSVKNFSKGYTDTQIKVRNATTNDSWGPSGTAMAEIAELTYDQNEMLEVMDIIDRRLNDKGKNWRHVFKSLSLLEYCLHNGSENVVRWAKDNIYIITTLREFVYVDDNGHDQGQNVRTKAKEITSLLEDEHALKEARGDSRERDRDRDRTRSSRFDDDDDDRAPYEESRLSRAPSRASRYDDDDRDHRSRRRSRSRRPGRSRSRRRSRRPSPSAEHNSAEENDPELQRVIEESKRQAEEDAKRRNMANDSEAELQKAIQLSKEEDEARQRHQREREQQEQAFMGNQQNAYQPVDFFGNPVQPQPTGFLQQQPTGFIRPQNTGFVQPQYTGFVQPQHTGFVQPQATGFMQPQRTGFVQPQATGFVQPQATGFVQPQATGFMQPQRTGFVQPQATGFMQPQRTGFVQPQATGFMQPQRTGFVQPQATGFIQPQRTGFVQPQQNGFFNPQPTGYMQPQRTGMMQPQRTGFSQPFESNNPFPVMQPQRTGFGQTPNAPMMAPNHTGYVHPQPTGLQRQTTGYTGNNNPYSRPLQSQSTGILQQQQQQSAPRLEPTKTGSNNPFAQFSNLPSQSTAPATKPMKPVRTGDDRFSNIAQAISTGNPMGTDSFGNIGLTRVPTQHTGSKFTNSAGQTIQAQATGNTHNPFQSQQATGYYKQPMQQQQNMQQPYYNQQNYNYQNQQPMQGMQQQSMQPQVGSLIDL.

In terms of domain architecture, ENTH spans 10-142 (NFSKGYTDTQ…EDEHALKEAR (133 aa)). 2 stretches are compositionally biased toward basic and acidic residues: residues 136 to 160 (HALK…SSRF) and 183 to 192 (SRYDDDDRDH). The disordered stretch occupies residues 136-285 (HALKEARGDS…HQREREQQEQ (150 aa)). Residues 193 to 214 (RSRRRSRSRRPGRSRSRRRSRR) are compositionally biased toward basic residues. A phosphoserine mark is found at Ser212, Ser216, Ser218, and Ser223. UIM domains lie at 226-245 (ENDP…AEED) and 254-273 (DSEA…DEAR). Residues 230–248 (ELQRVIEESKRQAEEDAKR) show a composition bias toward basic and acidic residues. Phosphoserine is present on Ser255. Residues 266 to 283 (SKEEDEARQRHQREREQQ) show a composition bias toward basic and acidic residues. The residue at position 406 (Thr406) is a Phosphothreonine. Disordered stretches follow at residues 504–589 (NHTG…RTGD) and 683–702 (PMQG…LIDL). A compositionally biased stretch (polar residues) spans 514 to 534 (TGLQRQTTGYTGNNNPYSRPL). Low complexity predominate over residues 535-549 (QSQSTGILQQQQQQS). The span at 557-577 (KTGSNNPFAQFSNLPSQSTAP) shows a compositional bias: polar residues. Residues 683–695 (PMQGMQQQSMQPQ) are compositionally biased toward low complexity.

It belongs to the epsin family.

It localises to the cytoplasm. The protein localises to the membrane. Its function is as follows. Binds to membranes enriched in phosphatidylinositol 3,5-bisphosphate (PtdIns(3,5)P2) and phosphatidylinositol 4,5-bisphosphate (PtdIns(4,5)P2). Required for endocytosis and localization of actin. The protein is Epsin-1 (ent1) of Schizosaccharomyces pombe (strain 972 / ATCC 24843) (Fission yeast).